The sequence spans 197 residues: 3-isopropylmalate dehydratase small subunit (197 aa).

It belongs to the LeuD family. LeuD type 1 subfamily. In terms of assembly, heterodimer of LeuC and LeuD.

The catalysed reaction is (2R,3S)-3-isopropylmalate = (2S)-2-isopropylmalate. It participates in amino-acid biosynthesis; L-leucine biosynthesis; L-leucine from 3-methyl-2-oxobutanoate: step 2/4. Its function is as follows. Catalyzes the isomerization between 2-isopropylmalate and 3-isopropylmalate, via the formation of 2-isopropylmaleate. This chain is 3-isopropylmalate dehydratase small subunit, found in Geobacillus sp. (strain WCH70).